We begin with the raw amino-acid sequence, 348 residues long: UPF0283 membrane protein PBPRA2435 (348 aa).

3 consecutive transmembrane segments (helical) span residues 71-91 (GLLI…VVSA), 97-117 (WLAL…ITAL), and 211-231 (EAAV…LVAW).

Belongs to the UPF0283 family.

The protein localises to the cell inner membrane. This chain is UPF0283 membrane protein PBPRA2435, found in Photobacterium profundum (strain SS9).